Consider the following 133-residue polypeptide: Small ribosomal subunit protein uS8 (133 aa).

This sequence belongs to the universal ribosomal protein uS8 family. In terms of assembly, part of the 30S ribosomal subunit. Contacts proteins S5 and S12.

Its function is as follows. One of the primary rRNA binding proteins, it binds directly to 16S rRNA central domain where it helps coordinate assembly of the platform of the 30S subunit. This Prochlorococcus marinus (strain MIT 9301) protein is Small ribosomal subunit protein uS8.